The following is a 123-amino-acid chain: Ribosome-binding factor A (123 aa).

It belongs to the RbfA family. As to quaternary structure, monomer. Binds 30S ribosomal subunits, but not 50S ribosomal subunits or 70S ribosomes.

The protein localises to the cytoplasm. One of several proteins that assist in the late maturation steps of the functional core of the 30S ribosomal subunit. Associates with free 30S ribosomal subunits (but not with 30S subunits that are part of 70S ribosomes or polysomes). Required for efficient processing of 16S rRNA. May interact with the 5'-terminal helix region of 16S rRNA. The sequence is that of Ribosome-binding factor A from Lactobacillus johnsonii (strain CNCM I-12250 / La1 / NCC 533).